Reading from the N-terminus, the 100-residue chain is Urease subunit gamma (100 aa).

Belongs to the urease gamma subunit family. As to quaternary structure, heterotrimer of UreA (gamma), UreB (beta) and UreC (alpha) subunits. Three heterotrimers associate to form the active enzyme.

The protein localises to the cytoplasm. The catalysed reaction is urea + 2 H2O + H(+) = hydrogencarbonate + 2 NH4(+). The protein operates within nitrogen metabolism; urea degradation; CO(2) and NH(3) from urea (urease route): step 1/1. In Mycolicibacterium vanbaalenii (strain DSM 7251 / JCM 13017 / BCRC 16820 / KCTC 9966 / NRRL B-24157 / PYR-1) (Mycobacterium vanbaalenii), this protein is Urease subunit gamma.